A 364-amino-acid chain; its full sequence is Histidinol-phosphate aminotransferase (364 aa).

Residue K220 is modified to N6-(pyridoxal phosphate)lysine.

The protein belongs to the class-II pyridoxal-phosphate-dependent aminotransferase family. Histidinol-phosphate aminotransferase subfamily. In terms of assembly, homodimer. The cofactor is pyridoxal 5'-phosphate.

The enzyme catalyses L-histidinol phosphate + 2-oxoglutarate = 3-(imidazol-4-yl)-2-oxopropyl phosphate + L-glutamate. Its pathway is amino-acid biosynthesis; L-histidine biosynthesis; L-histidine from 5-phospho-alpha-D-ribose 1-diphosphate: step 7/9. This Stenotrophomonas maltophilia (strain R551-3) protein is Histidinol-phosphate aminotransferase.